Here is a 442-residue protein sequence, read N- to C-terminus: Cell division protein FtsA (442 aa).

It belongs to the FtsA/MreB family. In terms of assembly, self-interacts. Interacts with FtsZ.

The protein localises to the cell inner membrane. Its function is as follows. Cell division protein that is involved in the assembly of the Z ring. May serve as a membrane anchor for the Z ring. The sequence is that of Cell division protein FtsA from Rhizobium meliloti (strain 1021) (Ensifer meliloti).